The chain runs to 355 residues: Uroporphyrinogen decarboxylase (355 aa).

Residues Arg27–Arg31, Asp77, Tyr154, Thr209, and His327 contribute to the substrate site.

The protein belongs to the uroporphyrinogen decarboxylase family. As to quaternary structure, homodimer.

The protein localises to the cytoplasm. It carries out the reaction uroporphyrinogen III + 4 H(+) = coproporphyrinogen III + 4 CO2. Its pathway is porphyrin-containing compound metabolism; protoporphyrin-IX biosynthesis; coproporphyrinogen-III from 5-aminolevulinate: step 4/4. Its function is as follows. Catalyzes the decarboxylation of four acetate groups of uroporphyrinogen-III to yield coproporphyrinogen-III. The sequence is that of Uroporphyrinogen decarboxylase from Erwinia tasmaniensis (strain DSM 17950 / CFBP 7177 / CIP 109463 / NCPPB 4357 / Et1/99).